The sequence spans 378 residues: 3-dehydroquinate synthase (378 aa).

NAD(+) is bound by residues 115 to 119 (GVVGD), 139 to 140 (TS), Lys-152, and Lys-161. Residues Glu-194, His-256, and His-275 each coordinate Zn(2+).

The protein belongs to the sugar phosphate cyclases superfamily. Dehydroquinate synthase family. Co(2+) serves as cofactor. Zn(2+) is required as a cofactor. It depends on NAD(+) as a cofactor.

It localises to the cytoplasm. The enzyme catalyses 7-phospho-2-dehydro-3-deoxy-D-arabino-heptonate = 3-dehydroquinate + phosphate. It participates in metabolic intermediate biosynthesis; chorismate biosynthesis; chorismate from D-erythrose 4-phosphate and phosphoenolpyruvate: step 2/7. Functionally, catalyzes the conversion of 3-deoxy-D-arabino-heptulosonate 7-phosphate (DAHP) to dehydroquinate (DHQ). The chain is 3-dehydroquinate synthase from Brucella canis (strain ATCC 23365 / NCTC 10854 / RM-666).